The chain runs to 694 residues: E3 ubiquitin-protein ligase SPL11 (694 aa).

Residues 1–12 (MAGDRAEEEEGE) show a composition bias toward acidic residues. 2 disordered regions span residues 1–21 (MAGD…ARAA) and 343–363 (NGME…ACSS). Residues 272 to 346 (TIPDEFRCPI…SQWCETNGME (75 aa)) enclose the U-box domain. The span at 350-363 (RSTQPNKPTPACSS) shows a compositional bias: polar residues. ARM repeat units follow at residues 398–438 (NANN…NLSI), 439–479 (HEDN…SLSV), 480–520 (IDEY…NLCI), 521–561 (YQGN…ILSS), 562–602 (HPEG…HLCS), and 603–650 (GEHH…FLVQ). The segment covering 650 to 667 (QQQEEQESQSQASAQVPP) has biased composition (low complexity). The tract at residues 650-694 (QQQEEQESQSQASAQVPPQATPEQVPENDIPEQLDSPASQYPMVV) is disordered.

As to quaternary structure, interacts with SPIN1 (via N-terminus). As to expression, highly expressed in leaf, at intermediate levels in shoot and weakly in root.

It is found in the nucleus. The protein resides in the cytoplasm. The enzyme catalyses S-ubiquitinyl-[E2 ubiquitin-conjugating enzyme]-L-cysteine + [acceptor protein]-L-lysine = [E2 ubiquitin-conjugating enzyme]-L-cysteine + N(6)-ubiquitinyl-[acceptor protein]-L-lysine.. Its pathway is protein modification; protein ubiquitination. E3 ubiquitin-protein ligase that negatively regulates programmed cell death and disease resistance. Participates in flowering time control by mediating ubiquitination and subsequent proteasomal degradation of SPIN1. The protein is E3 ubiquitin-protein ligase SPL11 (SPL11) of Oryza sativa subsp. japonica (Rice).